A 139-amino-acid chain; its full sequence is Probable cytochrome b5 (139 aa).

One can recognise a Cytochrome b5 heme-binding domain in the interval 2–78; that stretch reads SAEFTYQDVA…LEPLLVGTLK (77 aa). 2 residues coordinate heme: histidine 37 and histidine 61. The chain crosses the membrane as a helical span at residues 105–125; sequence GLGIGLYAVLVLGGLAGFAAY.

This sequence belongs to the cytochrome b5 family.

It is found in the endoplasmic reticulum membrane. The protein localises to the microsome membrane. Its function is as follows. Membrane bound hemoprotein which function as an electron carrier for several membrane bound oxygenases. This Neurospora crassa (strain ATCC 24698 / 74-OR23-1A / CBS 708.71 / DSM 1257 / FGSC 987) protein is Probable cytochrome b5.